The following is a 389-amino-acid chain: Chalcone synthase (389 aa).

Catalysis depends on residues C164, H303, and N336.

This sequence belongs to the thiolase-like superfamily. Chalcone/stilbene synthases family. In terms of assembly, homodimer. As to expression, mainly expressed in flowers, to a lower extent in young leaves, and barely in mature leaves and twigs.

The enzyme catalyses (E)-4-coumaroyl-CoA + 3 malonyl-CoA + 3 H(+) = 2',4,4',6'-tetrahydroxychalcone + 3 CO2 + 4 CoA. It participates in secondary metabolite biosynthesis; flavonoid biosynthesis. In terms of biological role, the primary product of this enzyme is 4,2',4',6'-tetrahydroxychalcone (also termed naringenin-chalcone or chalcone) which can under specific conditions spontaneously isomerize into naringenin. The polypeptide is Chalcone synthase (Rhododendron dauricum (Azalea daurica)).